The sequence spans 316 residues: NADH-cytochrome b5 reductase-like (316 aa).

The Oxidoreductase-like domain occupies 17–53; that stretch reads KPVEPLPSQCCGSGCSPCVFDLYYRDLERWETARARN. The region spanning 76-178 is the FAD-binding FR-type domain; the sequence is ETFLAFHIST…RGPFGSFLYE (103 aa). FAD is bound by residues 158 to 173 and 183 to 215; these read ESWR…GPFG and GELL…TFVT.

It belongs to the flavoprotein pyridine nucleotide cytochrome reductase family. Requires FAD as cofactor.

It carries out the reaction 2 Fe(III)-[cytochrome b5] + NADH = 2 Fe(II)-[cytochrome b5] + NAD(+) + H(+). NADH-cytochrome b5 reductases are involved in desaturation and elongation of fatty acids, cholesterol biosynthesis, drug metabolism, and, in erythrocyte, methemoglobin reduction. This is NADH-cytochrome b5 reductase-like (Cyb5rl) from Mus musculus (Mouse).